Consider the following 1036-residue polypeptide: Isoleucine--tRNA ligase (1036 aa).

Positions 46–56 (PFATGLPHYGH) match the 'HIGH' region motif. The 'KMSKS' region signature appears at 589-593 (KMSKR). Lys592 serves as a coordination point for ATP.

The protein belongs to the class-I aminoacyl-tRNA synthetase family. IleS type 2 subfamily. In terms of assembly, monomer. Zn(2+) serves as cofactor.

Its subcellular location is the cytoplasm. The enzyme catalyses tRNA(Ile) + L-isoleucine + ATP = L-isoleucyl-tRNA(Ile) + AMP + diphosphate. Catalyzes the attachment of isoleucine to tRNA(Ile). As IleRS can inadvertently accommodate and process structurally similar amino acids such as valine, to avoid such errors it has two additional distinct tRNA(Ile)-dependent editing activities. One activity is designated as 'pretransfer' editing and involves the hydrolysis of activated Val-AMP. The other activity is designated 'posttransfer' editing and involves deacylation of mischarged Val-tRNA(Ile). The protein is Isoleucine--tRNA ligase of Chlamydia trachomatis serovar D (strain ATCC VR-885 / DSM 19411 / UW-3/Cx).